The chain runs to 595 residues: Leiomodin-1 (595 aa).

Disordered stretches follow at residues 1–322 (MSKV…KVKN) and 467–568 (DKQR…QEKN). Position 12 is a phosphoserine (Ser12). Residues 27–40 (EEMEELEKELDVVD) are compositionally biased toward acidic residues. Composition is skewed to basic and acidic residues over residues 72-105 (CEKE…EDKG), 117-127 (QDSDVGKEPKK), 134-193 (FSRD…EKTG), 201-224 (SRDK…KLTA), 232-251 (RQED…KPEV), 259-289 (RDSR…REKQ), 467-476 (DKQRQKRLQE), and 484-493 (SGEKKDRLEV). Ser85 carries the phosphoserine modification. Phosphoserine is present on Ser135. 8 repeat units span residues 165–180 (AAVD…REER), 181–196 (AAAT…GSVR), 197–212 (NAGL…EEVK), 213–227 (EPSK…AENR), 228–243 (STVG…ESRE), 244–257 (DRDK…IGCG), 258–273 (SRDS…KEET), and 274–288 (QPDK…TREK). The segment at 165–288 (AAVDRKEAGK…VREEGKTREK (124 aa)) is 8 X approximate tandem repeats. Pro residues-rich tracts occupy residues 503-513 (SPKPSPQPSPK) and 527-538 (AAPPPPPPPLAP). The segment at 503-522 (SPKPSPQPSPKSAPKNSPKK) is 5 X 4 AA approximate tandem repeats. Phosphoserine is present on Ser550. In terms of domain architecture, WH2 spans 569–588 (SRDQLLAAIRSSNLKQLKKV).

As to expression, detected in smooth muscle, in stomach and uterus, blood vessel wall, and in slow fibers in extraocular muscle, urinary bladder and sternothyroid muscle (at protein level).

The protein localises to the cytoplasm. It is found in the myofibril. Its subcellular location is the sarcomere. The protein resides in the cytoskeleton. Functionally, required for proper contractility of visceral smooth muscle cells. Mediates nucleation of actin filaments. The sequence is that of Leiomodin-1 from Rattus norvegicus (Rat).